The sequence spans 101 residues: Small ribosomal subunit protein uS10 (101 aa).

It belongs to the universal ribosomal protein uS10 family. As to quaternary structure, part of the 30S ribosomal subunit.

In terms of biological role, involved in the binding of tRNA to the ribosomes. The sequence is that of Small ribosomal subunit protein uS10 from Amoebophilus asiaticus (strain 5a2).